A 682-amino-acid chain; its full sequence is TPR repeat-containing thioredoxin TTL4 (682 aa).

2 disordered regions span residues 1–120 and 132–157; these read MSHY…GTPL and NNNN…TGNI. Phosphoserine is present on Ser8. Residues 16–39 are compositionally biased toward basic and acidic residues; it reads KFRDSLSFQRDDDVINKPDFRELD. Ser42 carries the post-translational modification Phosphoserine. Over residues 48-71 the composition is skewed to low complexity; that stretch reads GSSSAAATPAASGSSSSSSGSASG. 7 TPR repeats span residues 211-244, 246-278, 280-312, 402-435, 449-482, 483-516, and 518-550; these read SEEV…SPEN, AYRS…DPSY, RAHQ…PDQA, AYVL…DHSN, VAKA…DAFN, SVLY…QPSY, and KALL…LPGD. The Thioredoxin domain occupies 587–674; that stretch reads DKFKTATSLP…MVCPSHQLLE (88 aa).

Widely expressed.

Functionally, involved in osmotic and salt stress tolerance. May play a role in the control of meristematic cell size during osmotic stress. The protein is TPR repeat-containing thioredoxin TTL4 (TTL4) of Arabidopsis thaliana (Mouse-ear cress).